Consider the following 580-residue polypeptide: Pentatricopeptide repeat-containing protein At5g10690 (580 aa).

9 PPR repeats span residues 76 to 110, 112 to 142, 151 to 181, 189 to 223, 224 to 254, 266 to 296, 302 to 337, 342 to 376, and 382 to 417; these read NTIV…GGIG, DSIS…IEYG, SSSL…YDIL, SVLI…RLEP, DRLT…MKEK, DVVT…MKLC, DRTA…GANE, KPHL…SSGS, and QQEA…KTIP. The CBS domain occupies 486–553; the sequence is VPIVDDRGSC…IVVHCGNFSG (68 aa).

The protein belongs to the PPR family. P subfamily.

The polypeptide is Pentatricopeptide repeat-containing protein At5g10690 (CBSPPR1) (Arabidopsis thaliana (Mouse-ear cress)).